The sequence spans 177 residues: ATP synthase subunit b, chloroplastic (177 aa).

Residues 22–42 (ILETNIINLAAVVGIVVFFVG) traverse the membrane as a helical segment.

The protein belongs to the ATPase B chain family. F-type ATPases have 2 components, F(1) - the catalytic core - and F(0) - the membrane proton channel. F(1) has five subunits: alpha(3), beta(3), gamma(1), delta(1), epsilon(1). F(0) has four main subunits: a(1), b(1), b'(1) and c(10-14). The alpha and beta chains form an alternating ring which encloses part of the gamma chain. F(1) is attached to F(0) by a central stalk formed by the gamma and epsilon chains, while a peripheral stalk is formed by the delta, b and b' chains.

It localises to the plastid. It is found in the chloroplast thylakoid membrane. Its function is as follows. F(1)F(0) ATP synthase produces ATP from ADP in the presence of a proton or sodium gradient. F-type ATPases consist of two structural domains, F(1) containing the extramembraneous catalytic core and F(0) containing the membrane proton channel, linked together by a central stalk and a peripheral stalk. During catalysis, ATP synthesis in the catalytic domain of F(1) is coupled via a rotary mechanism of the central stalk subunits to proton translocation. Functionally, component of the F(0) channel, it forms part of the peripheral stalk, linking F(1) to F(0). The polypeptide is ATP synthase subunit b, chloroplastic (Oedogonium cardiacum (Filamentous green alga)).